A 157-amino-acid chain; its full sequence is Protein Smg (157 aa).

The protein belongs to the Smg family.

The protein is Protein Smg of Escherichia coli O139:H28 (strain E24377A / ETEC).